The chain runs to 226 residues: Pre-mRNA-splicing factor SPF27 (226 aa).

Position 2 is an N-acetylalanine (A2). A Phosphoserine modification is found at S94. Positions 139-223 form a coiled coil; that stretch reads YNENLVHMIE…HGEANKENIR (85 aa).

It belongs to the SPF27 family. Component of the pre-catalytic and catalytic spliceosome complexes. Component of the postcatalytic spliceosome P complex. Component of the PRP19-CDC5L splicing complex composed of a core complex comprising a homotetramer of PRPF19, CDC5L, PLRG1 and BCAS2, and at least three less stably associated proteins CTNNBL1, CWC15 and HSPA8. Interacts directly in the complex with PRPF19, CDC5L and PLRG1.

It localises to the nucleus. The protein resides in the nucleolus. Its function is as follows. Required for pre-mRNA splicing as component of the activated spliceosome. Component of the PRP19-CDC5L complex that forms an integral part of the spliceosome and is required for activating pre-mRNA splicing. May have a scaffolding role in the spliceosome assembly as it contacts all other components of the core complex. The PRP19-CDC5L complex may also play a role in the response to DNA damage (DDR). The chain is Pre-mRNA-splicing factor SPF27 (BCAS2) from Pongo abelii (Sumatran orangutan).